Consider the following 418-residue polypeptide: Endoglucanase EG-II (418 aa).

The signal sequence occupies residues 1-21 (MNKSVAPLLLAASILYGGAVA). Gln-22 carries the post-translational modification Pyrrolidone carboxylic acid. The CBM1 domain maps to 22–57 (QQTVWGQCGGIGWSGPTNCAPGSACSTLNPYYAQCI). A linker region spans residues 58–91 (PGATTITTSTRPPSGPTTTTRATSTSSSTPPTSS). A disordered region spans residues 63 to 91 (ITTSTRPPSGPTTTTRATSTSSSTPPTSS). Residues 92–418 (GVRFAGVNIA…SLVSSCLARK (327 aa)) form a catalytic region. A disulfide bridge links Cys-107 with Cys-113. N-linked (GlcNAc) asparagine glycosylation occurs at Asn-124. Cysteines 183 and 190 form a disulfide. Glu-239 serves as the catalytic Proton donor/acceptor. Disulfide bonds link Cys-323/Cys-359 and Cys-364/Cys-414. Residue Glu-350 is the Nucleophile of the active site.

The protein belongs to the glycosyl hydrolase 5 (cellulase A) family.

The protein localises to the secreted. It carries out the reaction Endohydrolysis of (1-&gt;4)-beta-D-glucosidic linkages in cellulose, lichenin and cereal beta-D-glucans.. Functionally, endoglucanase (EG) that cleaves the internal beta-1,4-glucosidic bonds in cellulose. The degradation of cellulose involves an interplay between different cellulolytic enzymes. Hydrolysis starts with EGs, which cut internal glycosidic linkages to reduce the polymerization degree of the substrate and creates new chain ends for exocellobiohydrolases (CBHs). The CBH release the disaccharide cellobiose from the non-reducing end of the cellulose polymer chain. Finally, beta-1,4-glucosidases hydrolyze the cellobiose and other short cello-oligosaccharides into glucose units. This chain is Endoglucanase EG-II (egl2), found in Hypocrea jecorina (Trichoderma reesei).